The following is a 158-amino-acid chain: 6,7-dimethyl-8-ribityllumazine synthase (158 aa).

5-amino-6-(D-ribitylamino)uracil is bound by residues F22, 57 to 59 (AVE), and 81 to 83 (AVI). 86 to 87 (GT) provides a ligand contact to (2S)-2-hydroxy-3-oxobutyl phosphate. H89 acts as the Proton donor in catalysis. F114 provides a ligand contact to 5-amino-6-(D-ribitylamino)uracil. R128 serves as a coordination point for (2S)-2-hydroxy-3-oxobutyl phosphate.

Belongs to the DMRL synthase family. In terms of assembly, forms an icosahedral capsid composed of 60 subunits, arranged as a dodecamer of pentamers.

The catalysed reaction is (2S)-2-hydroxy-3-oxobutyl phosphate + 5-amino-6-(D-ribitylamino)uracil = 6,7-dimethyl-8-(1-D-ribityl)lumazine + phosphate + 2 H2O + H(+). It functions in the pathway cofactor biosynthesis; riboflavin biosynthesis; riboflavin from 2-hydroxy-3-oxobutyl phosphate and 5-amino-6-(D-ribitylamino)uracil: step 1/2. Catalyzes the formation of 6,7-dimethyl-8-ribityllumazine by condensation of 5-amino-6-(D-ribitylamino)uracil with 3,4-dihydroxy-2-butanone 4-phosphate. This is the penultimate step in the biosynthesis of riboflavin. The polypeptide is 6,7-dimethyl-8-ribityllumazine synthase (Shewanella frigidimarina (strain NCIMB 400)).